The chain runs to 636 residues: Methionine--tRNA ligase (636 aa).

The 'HIGH' region motif lies at 12-22 (YYVNGDPHVGS). Zn(2+)-binding residues include C127, C130, C145, and C148. The 'KMSKS' region motif lies at 298–302 (KMSKS). Residue K301 coordinates ATP. The region spanning 535–636 (EFNKIEIKVV…KTVEAGAIVS (102 aa)) is the tRNA-binding domain.

Belongs to the class-I aminoacyl-tRNA synthetase family. MetG type 2A subfamily. In terms of assembly, homodimer. It depends on Zn(2+) as a cofactor.

Its subcellular location is the cytoplasm. The catalysed reaction is tRNA(Met) + L-methionine + ATP = L-methionyl-tRNA(Met) + AMP + diphosphate. In terms of biological role, is required not only for elongation of protein synthesis but also for the initiation of all mRNA translation through initiator tRNA(fMet) aminoacylation. The polypeptide is Methionine--tRNA ligase (metG) (Fusobacterium nucleatum subsp. nucleatum (strain ATCC 25586 / DSM 15643 / BCRC 10681 / CIP 101130 / JCM 8532 / KCTC 2640 / LMG 13131 / VPI 4355)).